Here is a 602-residue protein sequence, read N- to C-terminus: Elongation factor 4 (602 aa).

A tr-type G domain is found at 7–189 (NNIRNFSIIA…RILTAVPPPQ (183 aa)). GTP contacts are provided by residues 19–24 (DHGKST) and 136–139 (NKID).

It belongs to the TRAFAC class translation factor GTPase superfamily. Classic translation factor GTPase family. LepA subfamily.

Its subcellular location is the cell inner membrane. It catalyses the reaction GTP + H2O = GDP + phosphate + H(+). Functionally, required for accurate and efficient protein synthesis under certain stress conditions. May act as a fidelity factor of the translation reaction, by catalyzing a one-codon backward translocation of tRNAs on improperly translocated ribosomes. Back-translocation proceeds from a post-translocation (POST) complex to a pre-translocation (PRE) complex, thus giving elongation factor G a second chance to translocate the tRNAs correctly. Binds to ribosomes in a GTP-dependent manner. The chain is Elongation factor 4 from Protochlamydia amoebophila (strain UWE25).